Consider the following 95-residue polypeptide: Large ribosomal subunit protein uL23 (95 aa).

It belongs to the universal ribosomal protein uL23 family. As to quaternary structure, part of the 50S ribosomal subunit. Contacts protein L29, and trigger factor when it is bound to the ribosome.

In terms of biological role, one of the early assembly proteins it binds 23S rRNA. One of the proteins that surrounds the polypeptide exit tunnel on the outside of the ribosome. Forms the main docking site for trigger factor binding to the ribosome. The protein is Large ribosomal subunit protein uL23 of Shouchella clausii (strain KSM-K16) (Alkalihalobacillus clausii).